Consider the following 96-residue polypeptide: Protein YddL (96 aa).

Residues 1-21 (MKLKIVAVVVTGLLAANVAHA) form the signal peptide.

The polypeptide is Protein YddL (yddL) (Escherichia coli (strain K12)).